The chain runs to 759 residues: Serine/threonine-protein kinase HRK1 (759 aa).

The segment at 1-32 (MPNLLSRNPFHGHHNDHHHDRENSSNNPPQLI) is disordered. S37 is subject to Phosphoserine. Residues 45 to 162 (KQSNDSLRSE…PPPSKSTSTV (118 aa)) form a disordered region. Residues 59–97 (SMKSTTTTTNYTTTNLNNNTHSHSNATSISTNNYNNNYE) are compositionally biased toward low complexity. Residues 113 to 122 (SPASPKQTHS) are compositionally biased toward polar residues. The Protein kinase domain maps to 215–722 (GKLGKLLGSG…LDDIFNDEWF (508 aa)). ATP-binding positions include 221–229 (LGSGAGGSV) and K244. The Proton acceptor role is filled by D340. Phosphoserine is present on residues S382 and S472. Residues 493–502 (PNTPASIQGK) are compositionally biased toward polar residues. Disordered stretches follow at residues 493 to 578 (PNTP…GRVD) and 614 to 682 (AANA…KIIH). At T495 the chain carries Phosphothreonine. A Phosphoserine modification is found at S498. Positions 510–519 (VEEETEENKE) are enriched in acidic residues. Residues 520–547 (DDSNNDKESTPDNDKESTIDIKISKNEN) show a composition bias toward basic and acidic residues. Low complexity predominate over residues 614 to 646 (AANANPDMVPQNNPQQQQQQQQQQQQQQQQQQQ). A compositionally biased stretch (polar residues) spans 663-672 (ASDNKSSQQH).

This sequence belongs to the protein kinase superfamily. Ser/Thr protein kinase family.

It localises to the cytoplasm. It carries out the reaction L-seryl-[protein] + ATP = O-phospho-L-seryl-[protein] + ADP + H(+). The catalysed reaction is L-threonyl-[protein] + ATP = O-phospho-L-threonyl-[protein] + ADP + H(+). Functionally, involved in regulating the activity of the plasma membrane proton pump PMA1. The sequence is that of Serine/threonine-protein kinase HRK1 (HRK1) from Saccharomyces cerevisiae (strain ATCC 204508 / S288c) (Baker's yeast).